The chain runs to 197 residues: Adenylyl-sulfate kinase (197 aa).

33–40 (GLSGSGKS) contacts ATP. The active-site Phosphoserine intermediate is the serine 107.

The protein belongs to the APS kinase family.

It carries out the reaction adenosine 5'-phosphosulfate + ATP = 3'-phosphoadenylyl sulfate + ADP + H(+). Its pathway is sulfur metabolism; hydrogen sulfide biosynthesis; sulfite from sulfate: step 2/3. Catalyzes the synthesis of activated sulfate. The chain is Adenylyl-sulfate kinase from Bacillus pumilus (strain SAFR-032).